Here is a 304-residue protein sequence, read N- to C-terminus: Putative integrase/recombinase HI_1414 (304 aa).

Positions 30 to 109 (TLFSDVIKRY…TIGHIFKIAL (80 aa)) constitute a Core-binding (CB) domain. In terms of domain architecture, Tyr recombinase spans 131 to 304 (PRTQRVTEEN…DMAEVAELLD (174 aa)). Residues arginine 174, lysine 199, histidine 256, arginine 259, and histidine 281 contribute to the active site. Catalysis depends on tyrosine 291, which acts as the O-(3'-phospho-DNA)-tyrosine intermediate.

Belongs to the 'phage' integrase family.

The chain is Putative integrase/recombinase HI_1414 from Haemophilus influenzae (strain ATCC 51907 / DSM 11121 / KW20 / Rd).